Reading from the N-terminus, the 203-residue chain is Nascent polypeptide-associated complex subunit alpha-like protein 1 (203 aa).

The span at 1–23 shows a compositional bias: basic and acidic residues; the sequence is MTTEEKEILAAKLEEQKIDLDKP. The interval 1 to 71 is disordered; it reads MTTEEKEILA…SEKKSRKAML (71 aa). A compositionally biased stretch (acidic residues) spans 24–50; the sequence is EVEDDDDNEDDDSDDDDKDDDEADGLD. Phosphoserine is present on Ser-36. The 66-residue stretch at 60–125 folds into the NAC-A/B domain; it reads SRSEKKSRKA…AKIEDLSSQI (66 aa). In terms of domain architecture, UBA spans 158–203; the sequence is EVDEEGVEPKDIELVMTQAGVSRPNAVKALKAADGDIVSAIMELTT.

Belongs to the NAC-alpha family.

May promote appropriate targeting of ribosome-nascent polypeptide complexes. The sequence is that of Nascent polypeptide-associated complex subunit alpha-like protein 1 from Arabidopsis thaliana (Mouse-ear cress).